The primary structure comprises 743 residues: Catalase-peroxidase (743 aa).

Residues Met1–Arg29 form a disordered region. Gly residues predominate over residues Asn8 to Ala19. The tryptophyl-tyrosyl-methioninium (Trp-Tyr) (with M-248) cross-link spans Trp100–Tyr222. The active-site Proton acceptor is the His101. A cross-link (tryptophyl-tyrosyl-methioninium (Tyr-Met) (with W-100)) is located at residues Tyr222–Met248. His263 contacts heme b.

The protein belongs to the peroxidase family. Peroxidase/catalase subfamily. Homodimer or homotetramer. The cofactor is heme b. Formation of the three residue Trp-Tyr-Met cross-link is important for the catalase, but not the peroxidase activity of the enzyme.

The enzyme catalyses H2O2 + AH2 = A + 2 H2O. It catalyses the reaction 2 H2O2 = O2 + 2 H2O. Functionally, bifunctional enzyme with both catalase and broad-spectrum peroxidase activity. The sequence is that of Catalase-peroxidase from Stutzerimonas stutzeri (strain A1501) (Pseudomonas stutzeri).